Here is a 510-residue protein sequence, read N- to C-terminus: Ninja-family protein mc410 (510 aa).

Disordered regions lie at residues 1-179 (MDEN…RQIL), 323-414 (HPSH…PSEF), and 481-510 (RHASVEQTSQEPGTGVSSFPSSNPAASAQS). 2 stretches are compositionally biased toward basic and acidic residues: residues 31-44 (SKVEEVDRDGKVIN) and 103-146 (RPVE…DKTR). Residues 148–160 (SHISITTDEGSTA) are compositionally biased toward polar residues. Basic and acidic residues-rich tracts occupy residues 363–389 (RAMEHVKGNGRQHKAEETSNSRGEENV) and 397–406 (RAKDPPDQPR). The span at 485 to 496 (VEQTSQEPGTGV) shows a compositional bias: polar residues. Residues 497 to 510 (SSFPSSNPAASAQS) are compositionally biased toward low complexity.

It belongs to the Ninja family.

The protein localises to the nucleus. This is Ninja-family protein mc410 (MC410) from Nicotiana tabacum (Common tobacco).